The sequence spans 370 residues: Gametogenetin-binding protein 1 (370 aa).

2 disordered regions span residues 26–114 (VGSK…QTLT) and 240–263 (PAAPQLALKDGLPHEEKGEREEAV). The span at 31 to 49 (GSKSTNKPLTRSQPSSSWE) shows a compositional bias: polar residues. The tract at residues 225–370 (LYKQLQKSAM…DEMGNWPPPD (146 aa)) is required for induction of mitochondrial fragmentation. Basic and acidic residues predominate over residues 250–260 (GLPHEEKGERE). Residues 298-370 (KKFRSTDTVG…DEMGNWPPPD (73 aa)) are interaction with GGN.

Interacts with CCDC159. Interacts with isoform 1 and isoform 2 of GGN. In terms of tissue distribution, testis-specific. In the testis, expressed only in germ cells and not in somatic cells. Expression starts in late primary spermatocytes in stage X-XII tubules and gradually increases towards step 1-3 spermatids in stage I-III tubules. Expression then declines continuously and disappears after step 7 spermatids in stage VII tubules (at protein level).

It is found in the cytoplasm. The protein localises to the membrane. Its subcellular location is the golgi apparatus. It localises to the mitochondrion intermembrane space. Induces mitochondrial fragmentation, possibly by promoting DNM1L-dependent fission and may play a role in mitochondrial morphogenesis during spermatogenesis. In Mus musculus (Mouse), this protein is Gametogenetin-binding protein 1 (Ggnbp1).